We begin with the raw amino-acid sequence, 166 residues long: Ureidoglycolate lyase (166 aa).

This sequence belongs to the ureidoglycolate lyase family. In terms of assembly, homodimer. Ni(2+) serves as cofactor.

It carries out the reaction (S)-ureidoglycolate = urea + glyoxylate. The protein operates within nitrogen metabolism; (S)-allantoin degradation. In terms of biological role, catalyzes the catabolism of the allantoin degradation intermediate (S)-ureidoglycolate, generating urea and glyoxylate. Involved in the utilization of allantoin as nitrogen source. This Azotobacter vinelandii (strain DJ / ATCC BAA-1303) protein is Ureidoglycolate lyase.